Consider the following 376-residue polypeptide: Queuine tRNA-ribosyltransferase (376 aa).

D93 acts as the Proton acceptor in catalysis. Substrate is bound by residues 93–97, D147, Q190, and G217; that span reads DSGGF. Positions 248–254 are RNA binding; the sequence is GVGKPDD. Residue D267 is the Nucleophile of the active site. Zn(2+) contacts are provided by C305, C307, C310, and H336.

Belongs to the queuine tRNA-ribosyltransferase family. Homodimer. Within each dimer, one monomer is responsible for RNA recognition and catalysis, while the other monomer binds to the replacement base PreQ1. The cofactor is Zn(2+).

It catalyses the reaction 7-aminomethyl-7-carbaguanine + guanosine(34) in tRNA = 7-aminomethyl-7-carbaguanosine(34) in tRNA + guanine. Its pathway is tRNA modification; tRNA-queuosine biosynthesis. Catalyzes the base-exchange of a guanine (G) residue with the queuine precursor 7-aminomethyl-7-deazaguanine (PreQ1) at position 34 (anticodon wobble position) in tRNAs with GU(N) anticodons (tRNA-Asp, -Asn, -His and -Tyr). Catalysis occurs through a double-displacement mechanism. The nucleophile active site attacks the C1' of nucleotide 34 to detach the guanine base from the RNA, forming a covalent enzyme-RNA intermediate. The proton acceptor active site deprotonates the incoming PreQ1, allowing a nucleophilic attack on the C1' of the ribose to form the product. After dissociation, two additional enzymatic reactions on the tRNA convert PreQ1 to queuine (Q), resulting in the hypermodified nucleoside queuosine (7-(((4,5-cis-dihydroxy-2-cyclopenten-1-yl)amino)methyl)-7-deazaguanosine). This is Queuine tRNA-ribosyltransferase from Cereibacter sphaeroides (strain ATCC 17029 / ATH 2.4.9) (Rhodobacter sphaeroides).